Consider the following 71-residue polypeptide: DNA gyrase inhibitor YacG (71 aa).

Residues C7, C10, C26, and C30 each coordinate Zn(2+).

This sequence belongs to the DNA gyrase inhibitor YacG family. As to quaternary structure, interacts with GyrB. Zn(2+) serves as cofactor.

Functionally, inhibits all the catalytic activities of DNA gyrase by preventing its interaction with DNA. Acts by binding directly to the C-terminal domain of GyrB, which probably disrupts DNA binding by the gyrase. This chain is DNA gyrase inhibitor YacG, found in Shewanella amazonensis (strain ATCC BAA-1098 / SB2B).